Here is a 288-residue protein sequence, read N- to C-terminus: Energy-coupling factor transporter ATP-binding protein EcfA2 (288 aa).

The 241-residue stretch at 3 to 243 (IVFEAVSHIY…RAELEAIGLG (241 aa)) folds into the ABC transporter domain. 40–47 (GPTGSGKS) contacts ATP.

It belongs to the ABC transporter superfamily. Energy-coupling factor EcfA family. In terms of assembly, forms a stable energy-coupling factor (ECF) transporter complex composed of 2 membrane-embedded substrate-binding proteins (S component), 2 ATP-binding proteins (A component) and 2 transmembrane proteins (T component).

The protein resides in the cell membrane. ATP-binding (A) component of a common energy-coupling factor (ECF) ABC-transporter complex. Unlike classic ABC transporters this ECF transporter provides the energy necessary to transport a number of different substrates. This chain is Energy-coupling factor transporter ATP-binding protein EcfA2, found in Symbiobacterium thermophilum (strain DSM 24528 / JCM 14929 / IAM 14863 / T).